Here is a 706-residue protein sequence, read N- to C-terminus: Heat shock protein 75 kDa, mitochondrial (706 aa).

Residues 1–60 (MARELRALLLWGRGLQSALRAPALAGVRRGKPVLHLQKTTVHFRDPTQSLASGISAGQLY) constitute a mitochondrion transit peptide. ATP contacts are provided by Asn121 and Asp160. Position 172 is a phosphoserine (Ser172). Asn173 provides a ligand contact to ATP. Residue Thr176 is modified to Phosphothreonine. Position 196 is a phosphoserine (Ser196). An ATP-binding site is contributed by Phe207. Residues Lys264, Lys326, and Lys334 each carry the N6-acetyllysine modification. Position 404 (Arg404) interacts with ATP. N6-acetyllysine occurs at positions 426, 433, and 468. Thr496 is subject to Phosphothreonine. Ser570 bears the Phosphoserine mark.

Belongs to the heat shock protein 90 family. In terms of assembly, binds to the intracellular domain of tumor necrosis factor type 1 receptor. Binds to RB1. Interacts with SRC. Interacts with SDHA.

It is found in the mitochondrion. It localises to the mitochondrion inner membrane. The protein localises to the mitochondrion matrix. In terms of biological role, chaperone that expresses an ATPase activity. Involved in maintaining mitochondrial function and polarization, downstream of PINK1 and mitochondrial complex I. Is a negative regulator of mitochondrial respiration able to modulate the balance between oxidative phosphorylation and aerobic glycolysis. The impact of TRAP1 on mitochondrial respiration is probably mediated by modulation of mitochondrial SRC and inhibition of SDHA. This chain is Heat shock protein 75 kDa, mitochondrial (Trap1), found in Rattus norvegicus (Rat).